An 886-amino-acid polypeptide reads, in one-letter code: Extended synaptotagmin-3 (886 aa).

Positions 1 to 21 (MRAEEPCAPGAPSALGAQRTP) are disordered. Residues 1-29 (MRAEEPCAPGAPSALGAQRTPGPELRLSS) are Cytoplasmic-facing. Helical transmembrane passes span 30-50 (QLLPELCTFVVRVLFYLGPVY) and 51-71 (LAGYLGLSITWLLLGALLWMW). At 72–886 (WRRNRRGKLG…ELTPNGQPRS (815 aa)) the chain is on the cytoplasmic side. Residues 114–291 (DVERVEWANK…LPNRVTVPVK (178 aa)) enclose the SMP-LTD domain. 2 consecutive C2 domains span residues 291–408 (KKGL…DEWF) and 426–566 (SLLT…QLDH). Residues Lys321, Asp322, Asp332, Asp379, Glu380, Asp381, Asp383, Asp385, and Asp386 each coordinate Ca(2+). Residues 613–673 (QGPKAQPQEE…PEPKGKDSAK (61 aa)) form a disordered region. The segment covering 642–659 (RSTTTTTSATTVATEPTS) has biased composition (low complexity). Positions 664-673 (PEPKGKDSAK) are enriched in basic and acidic residues. Positions 754–876 (QLGEIQLTVR…DLIKGFSQWY (123 aa)) constitute a C2 3 domain. A required for phosphatidylinositol 4,5-bisphosphate-dependent location at the cell membrane region spans residues 801-808 (RKWACRKK).

It belongs to the extended synaptotagmin family. In terms of assembly, interacts with ESYT1 and ESYT2. Widely expressed with high level in cerebellum and skin.

Its subcellular location is the cell membrane. It localises to the endoplasmic reticulum membrane. Binds glycerophospholipids in a barrel-like domain and may play a role in cellular lipid transport. Tethers the endoplasmic reticulum to the cell membrane and promotes the formation of appositions between the endoplasmic reticulum and the cell membrane. This is Extended synaptotagmin-3 from Homo sapiens (Human).